A 305-amino-acid polypeptide reads, in one-letter code: Glycine--tRNA ligase alpha subunit (305 aa).

It belongs to the class-II aminoacyl-tRNA synthetase family. As to quaternary structure, tetramer of two alpha and two beta subunits.

It localises to the cytoplasm. The enzyme catalyses tRNA(Gly) + glycine + ATP = glycyl-tRNA(Gly) + AMP + diphosphate. This chain is Glycine--tRNA ligase alpha subunit, found in Streptococcus pneumoniae (strain ATCC 700669 / Spain 23F-1).